We begin with the raw amino-acid sequence, 181 residues long: uncharacterized protein (181 aa).

The protein belongs to the methyltransferase superfamily.

This is an uncharacterized protein from Bacillus subtilis (strain 168).